The following is a 309-amino-acid chain: UDP-3-O-acyl-N-acetylglucosamine deacetylase (309 aa).

Residues H78, H235, and D239 each contribute to the Zn(2+) site. H262 serves as the catalytic Proton donor.

It belongs to the LpxC family. The cofactor is Zn(2+).

The enzyme catalyses a UDP-3-O-[(3R)-3-hydroxyacyl]-N-acetyl-alpha-D-glucosamine + H2O = a UDP-3-O-[(3R)-3-hydroxyacyl]-alpha-D-glucosamine + acetate. It participates in glycolipid biosynthesis; lipid IV(A) biosynthesis; lipid IV(A) from (3R)-3-hydroxytetradecanoyl-[acyl-carrier-protein] and UDP-N-acetyl-alpha-D-glucosamine: step 2/6. In terms of biological role, catalyzes the hydrolysis of UDP-3-O-myristoyl-N-acetylglucosamine to form UDP-3-O-myristoylglucosamine and acetate, the committed step in lipid A biosynthesis. The chain is UDP-3-O-acyl-N-acetylglucosamine deacetylase from Syntrophotalea carbinolica (strain DSM 2380 / NBRC 103641 / GraBd1) (Pelobacter carbinolicus).